We begin with the raw amino-acid sequence, 294 residues long: Elongation factor Ts (294 aa).

Residues 80–83 (TDFV) form an involved in Mg(2+) ion dislocation from EF-Tu region.

This sequence belongs to the EF-Ts family.

Its subcellular location is the cytoplasm. In terms of biological role, associates with the EF-Tu.GDP complex and induces the exchange of GDP to GTP. It remains bound to the aminoacyl-tRNA.EF-Tu.GTP complex up to the GTP hydrolysis stage on the ribosome. The chain is Elongation factor Ts from Listeria innocua serovar 6a (strain ATCC BAA-680 / CLIP 11262).